Here is a 3498-residue protein sequence, read N- to C-terminus: MLRKTNLRMGTADVYKQNKNQEEDMLTTERLKKGYQMPLTQYELQSLVFNASENKLIRLEKAQKRSQSMIASVIHKKGEFHMNYDRERKIPKEQLPCFAPHNWKRILSDRVKFFSALARGTPLQQLSQRIPGFRRKELLFLEFSDYNISYDRAIWCVKLLCILGFNSSSKTQKKTLLDVATLELSQACNKTTIWLVTQLYKSFRNPIKRREATKTWNYLTGFMKYMFDDGVLDKQEFLNDLTEVFNQLFLQKNFKNPSVLSTFMKYYVYFVEDLSSSLVLARRSSTLLCQALGFLFEMAQDKRKIDAYYDSANKTFIKKEFENEDGEIYEFEDYDDFIDMLDEIPDVPYFDETDKTPEAQAEELIKQHEKRKAGSLKKSERRRRRGLSKNRPKKMPQNPSNEASLDHDKVQIKQEPMDYDEYGGQQSDNSMDYDSFSHQYDPSYEPLPFKPLHTDIPKKLTDDEEFKYMKIGKRSVTPERISGRYGSMTYPFWIQQGGVGIDPPKDEVLDFSNPTPTETVNTQPQIDFESSPSASPALSVDKENECEKKEDESKTKEKNKDKEKDKEKEKSVDEHTNDLDVPINPDDAEMADANDKTDASEKQKLVEEEPTGKENEDDTSSKTAKTSTSAEKSEAPSIVDSNDKIDKEPNASSTSNDETSKDDTVPMESDPPAATEKPKESTEITTEEPLEVDKAPEVDKSEKEHEDDIMIIESNKKADEDDCVVIAVVDPDQEQTPESEKKKDGEEERDKNKDTDVADNEPEKIYTDEELAEIKIRKEKEMKIATLASHIKEKMVSDKKWKEKTSHAGWRTLDQCSQFSEALHLLSSMVQYMACVTPESFVWNDLSVQQEERRHRILPQLCGSPLDYLPCELHKLPVMEGVEEVVDCLRLRHCEIVRRSQAAEDRWLPNAAFLQSFGRIIDTCVDVIGIMDNIDVEKPNAITNAGLRLFAFREKFEKQEALLKTMLMFKWCITEEREGSFRATYIAKLLRFGMDQNPENTIGGWQVMDLFFKFMSTEGPKHGSKMYQAHFDSTVAIMIEMMREKIFSITDILRELEKDSDLDYNAPLMERQRKQKIPKISKRHRKPETPDDTKLVHFTTEYTPKRLFMGKKMDLLERMIIILPQLDVDEDTDEYRLRRLLLFGLKPAANVYFRRARAIYKSITKEFTTRLYIEFDRSSKVTTAHKKINQNRLDDLLRQFRAQTYHDQHLILERIVYNFIDGIGGFLKKNCDDVPAPEVANIICEMYEFSMDITSIFDFFEMVNPYLKAVDDKIAHFRMDVLPDMYYTETAFIFVSFFMKHWQRFLLHPRACAIVNQCFVLIQDMIRADDHMITCWGRTVAIFVFHARKAIANAGLQNEEFLAEDSHFWRVFPNAQHVDLDVGYFNEDFAGVKLQLRGGTLRYDSYNDFKWLVSNMKPNLKKKPHLKRPNTRYSFVVRAFMEARQHGRNFDRINELANYCANITANDPPLSEYWIGAIKGLCFLSLDAPYPFKEMSQQIDISDCSTHYSLTTFITCLAGKSAFYIPRLLAELTKHVFPLMLRHDGRLTSQKTHDVKRKVASKTTESRTLSEAEPGVCLCLLIICGLCCVGDEPFGLSVHYRGIEKKKKRFNNTADERIMHLFHWFEMDHAMFRTLGHISQLLEALQSRCRDANLVLPKNFPIKNPPKHQQELHREKAPYRPQYLFNIAKTVQFVICEQDWVTLRMFRFFQTRKMEAFNQDKLKQNCLGQQILRMALRRRTERENVHKLFEAHKISKKATVDKVLSFMNLWNFRATLFDLMLMIKEISPDGNSRHAQQGAIAADALMSEIGKCCRDMFLSAYKTKIKMPIAKTLTDFRLSDINKFWLIAPLVRMCPKPINIPPQYANTTVGTVAAKFLREAALLMDTPPTTPKERLLQCSWAMSKVPFINMILTCLQCEKMQQSKDVFLQSLYTQLQRETLRDHHRRSNWTNRREHRDCTIFRITLIGYIYKEILKATHVETWGLLIFQLMFHGIINPVREKLIYETCFDMLHHMVLWTLVDGDSMNQHDRYGSIRVRWPQYAGLMKKIRKEMQERFTDQTRNSLHRFLPIGKMQMSTISYKKYQKRPKVNQKMSKKFLAGEGLKNGKYSFLPEEKAKTNAFEHTDHLGDLIVKGGWKFRMFQTTRLDKVAKNVQNVLRSNMHHTHVLEFNRPQLLMSDNMFDDIFLAPPDIEITKIIEQPVPVIDEEEAKKRAEEEKEAAEKKEESKNAEDEKNKNNAENKKDTKEGEKGKSKDKEKDGEKEKCKDASKKDDVTSEKNELEKRASDAAAATNAPETNKDMDTSTPKPAPVTRSPATRGRGGGRKRNSGARGGGPRAKRANSRADTAQAAAATTQWNAPIANTSNPAAGGNFHAAMRGNQPPMSNGSSDETKVHIRNLLNRKKEEKRNSLADASAAAAAANSNAMGNTSSMPPSGPPMPMGSSMQSAGATQQLQGMQKHQMGGSMSGMNQNMGGMNQSMSHQAPPPYSSTNEMNRPLMNQYGGPHFAAPNPGPLNRSSGPVSSETRQQIMEQQMREKLAAHHQLVEQQKQRDAREREAREREAREHQERMQREAYMKEQQLLERKRAIEENNRIMEEQQREREMEAARKEAARRAAEEAYAAEQQRLELLRRQEEERLRKEAEERMRIQRENEERVRQEQMRLEAEERERIRRAEEERIQKELEDKVRREKEEAARQEKERQEQEARMREAREAELSRQRMEQQRRSQQNPYMNQQGQYSQQPPPSYQQSSYPNNYQPGQQGNQPPNYQQPSHQSMQQGHQAGYQQTSNQMQMNMQQQQNRQQGGPQQSFSGPGGINQPSQPGYSGYNQQGGQGQQGQMQQQRNPFGNQQDMQQPGAAKLMHAKPNEAHAQQYQHTQNQLSLAQKEKEKQYFQAKNLQASQANAQQQQQRFGDVVAGNVAGYGRPYGQQQLGASDQMGTSQLPGASTSRMNQGSSNPQGGMQSYQQQQPVLGQPGPIQTGQSTQQQIPAQSQQQYNSGRPQMHTTPTKNDMSARAPSGAMGQIANRMGHGTNPQGYGSTGQNVPGGYQQGQQQSGQGSYPQAQQQQPNQYSGSNQQVGQQAQQQQQQPLNQNVSQSQSAAQFGRPSQDSAYQQSGYNQTGNQSYQRPDQQQQGAQQNQWSGSNQAQNQLRSQQQAQQPLQQPQQSQQFQQPAQQAKNPMAQSAQYGGFGGQQQGYDQQQQGQIAPQQAQNPQASQSYGQQQTQQNRYGMGSSGYTANSGGSSNILNQSMEESGLNQGFSGASSNASSQQGGSSQMQQSGYGMPGNQMQMQQNQKQQVQRGMPTGMGQTNMGQSGMGQSGMGQTGMSRSGLGGGIGQQGQQSQQPQQPQVSQQQNQRGMNPGAQLPPYSTGQQQHQPQQSQISQQQQQQDQYRRMQAAQMQQQPTAQGQQNRMGMPSQQQSGAAYSNQMQFQGVRQGQQGMGGMGGSGQQQPQTQPHGSNQYYQQQQDQRMQQQPQQPGQQQQHGYGMGQYPNQQPPNQY.

Disordered stretches follow at residues 365 to 456 (IKQH…HTDI), 497 to 764 (GGVG…EPEK), 2209 to 2576 (AKKR…AYMK), 2589 to 2620 (ENNR…EAYA), 2637 to 2889 (LRKE…KEKQ), and 2917 to 3498 (NVAG…PNQY). The span at 368–394 (HEKRKAGSLKKSERRRRRGLSKNRPKK) shows a compositional bias: basic residues. Over residues 404–416 (SLDHDKVQIKQEP) the composition is skewed to basic and acidic residues. 2 stretches are compositionally biased toward polar residues: residues 424–440 (GQQS…SHQY) and 512–536 (SNPT…SASP). The stretch at 539-570 (SVDKENECEKKEDESKTKEKNKDKEKDKEKEK) forms a coiled coil. Composition is skewed to basic and acidic residues over residues 540 to 578 (VDKE…HTND) and 593 to 614 (ANDK…TGKE). Over residues 621–630 (SKTAKTSTSA) the composition is skewed to low complexity. Basic and acidic residues-rich tracts occupy residues 691–719 (EVDK…KKAD), 738–764 (ESEK…EPEK), and 2209–2285 (AKKR…KRAS). The required for nuclear localization stretch occupies residues 2142 to 3498 (QTTRLDKVAK…YPNQQPPNQY (1357 aa)). Positions 2203 to 2290 (VIDEEEAKKR…EKRASDAAAA (88 aa)) form a coiled coil. Low complexity-rich tracts occupy residues 2342–2360 (RADT…APIA) and 2409–2431 (LADA…SSMP). Residues 2395–2420 (RNLLNRKKEEKRNSLADASAAAAAAN) are a coiled coil. Positions 2444 to 2456 (QSAGATQQLQGMQ) are enriched in polar residues. A compositionally biased stretch (low complexity) spans 2459 to 2479 (QMGGSMSGMNQNMGGMNQSMS). A compositionally biased stretch (polar residues) spans 2514–2530 (NRSSGPVSSETRQQIME). 3 stretches are compositionally biased toward basic and acidic residues: residues 2547–2576 (QKQR…AYMK), 2589–2616 (ENNR…RAAE), and 2637–2724 (LRKE…EQQR). Over residues 2725 to 2770 (RSQQNPYMNQQGQYSQQPPPSYQQSSYPNNYQPGQQGNQPPNYQQP) the composition is skewed to low complexity. A compositionally biased stretch (polar residues) spans 2771 to 2783 (SHQSMQQGHQAGY). The span at 2784–2810 (QQTSNQMQMNMQQQQNRQQGGPQQSFS) shows a compositional bias: low complexity. Polar residues-rich tracts occupy residues 2816-2827 (NQPSQPGYSGYN), 2842-2852 (RNPFGNQQDMQ), 2868-2881 (HAQQ…QLSL), and 2926-2956 (GQQQ…SSNP). Positions 2957–2993 (QGGMQSYQQQQPVLGQPGPIQTGQSTQQQIPAQSQQQ) are enriched in low complexity. Over residues 2994-3009 (YNSGRPQMHTTPTKND) the composition is skewed to polar residues. The segment covering 3039–3100 (GQNVPGGYQQ…NVSQSQSAAQ (62 aa)) has biased composition (low complexity). The span at 3103 to 3127 (RPSQDSAYQQSGYNQTGNQSYQRPD) shows a compositional bias: polar residues. Low complexity-rich tracts occupy residues 3128–3184 (QQQQ…SAQY) and 3192–3223 (QGYD…QTQQ). Polar residues predominate over residues 3231–3253 (SGYTANSGGSSNILNQSMEESGL). The span at 3254-3311 (NQGFSGASSNASSQQGGSSQMQQSGYGMPGNQMQMQQNQKQQVQRGMPTGMGQTNMGQ) shows a compositional bias: low complexity. The segment covering 3312–3321 (SGMGQSGMGQ) has biased composition (gly residues). Composition is skewed to low complexity over residues 3336-3356 (QGQQ…NQRG) and 3370-3408 (QQQH…QGQQ). Positions 3414 to 3425 (PSQQQSGAAYSN) are enriched in polar residues. The span at 3426–3436 (QMQFQGVRQGQ) shows a compositional bias: low complexity. The segment covering 3437–3446 (QGMGGMGGSG) has biased composition (gly residues). Positions 3447-3498 (QQQPQTQPHGSNQYYQQQQDQRMQQQPQQPGQQQQHGYGMGQYPNQQPPNQY) are enriched in low complexity.

Belongs to the Mediator complex subunit 12 family. As to quaternary structure, component of the Mediator complex. As to expression, ubiquitously expressed.

The protein localises to the nucleus. Component of the Mediator complex, a coactivator involved in regulated gene transcription of nearly all RNA polymerase II-dependent genes. Mediator functions as a bridge to convey information from gene-specific regulatory proteins to the basal RNA polymerase II transcription machinery. Mediator is recruited to promoters by direct interactions with regulatory proteins and serves as a scaffold for the assembly of a functional preinitiation complex with RNA polymerase II and the general transcription factors. Functions downstream of let-60 during vulval induction. Required for asymmetric division of T-cells and for hypodermal development. In Caenorhabditis elegans, this protein is Mediator of RNA polymerase II transcription subunit 12 (dpy-22).